The sequence spans 89 residues: Small ribosomal subunit protein uS15 (89 aa).

Belongs to the universal ribosomal protein uS15 family. In terms of assembly, part of the 30S ribosomal subunit. Forms a bridge to the 50S subunit in the 70S ribosome, contacting the 23S rRNA.

One of the primary rRNA binding proteins, it binds directly to 16S rRNA where it helps nucleate assembly of the platform of the 30S subunit by binding and bridging several RNA helices of the 16S rRNA. Functionally, forms an intersubunit bridge (bridge B4) with the 23S rRNA of the 50S subunit in the ribosome. The sequence is that of Small ribosomal subunit protein uS15 from Mannheimia succiniciproducens (strain KCTC 0769BP / MBEL55E).